The chain runs to 216 residues: MHGNGGQPAAGGSESALSREGQPGPSGAAQGQVISNERSPRRYSTRTINGVQATNKFTAVGNPSLQRDPDWYRWNYNHSIAVWLRECSRSHAKICNCGQFRKHWFQECAGLEDRSTQASLEEAILRPLRVQGKRAKRKLDYHYSQPTPNRKKVYKTVRWQDELADREADFTPSEEDGGTTSSDFDEDINFDIGGDSGIVDELLGRPFTTPAPVRIV.

The interval M1–G50 is disordered. Low complexity predominate over residues G21 to Q32. C95 acts as the Phosphocysteine intermediate in catalysis. Residues D165–D187 form a disordered region. Over residues P172 to D187 the composition is skewed to acidic residues.

This sequence belongs to the gyrovirus protein VP2 family.

It carries out the reaction O-phospho-L-tyrosyl-[protein] + H2O = L-tyrosyl-[protein] + phosphate. The catalysed reaction is O-phospho-L-seryl-[protein] + H2O = L-seryl-[protein] + phosphate. The enzyme catalyses O-phospho-L-threonyl-[protein] + H2O = L-threonyl-[protein] + phosphate. Functionally, may act as a scaffold protein in virion assembly. May also play a role in intracellular signaling during viral replication. The sequence is that of Dual specificity protein phosphatase VP2 (VP2) from Gallus gallus (Chicken).